The primary structure comprises 115 residues: MNPLIQSLTEGQLRTDIPAFRPGDTVRVHAKVVEGTRERIQIFEGVVIARKGAGISETYTVRKISNGIGVERTFPIHTPRVDKIEVVRYGKVRRAKLYYLRALQGKAARIKEIRR.

Belongs to the bacterial ribosomal protein bL19 family.

In terms of biological role, this protein is located at the 30S-50S ribosomal subunit interface and may play a role in the structure and function of the aminoacyl-tRNA binding site. The polypeptide is Large ribosomal subunit protein bL19 (Streptococcus sanguinis (strain SK36)).